Reading from the N-terminus, the 73-residue chain is Hypotensin-like peptide (73 aa).

Positions 1 to 25 (MKMMIAIVFVSILLLMFSLSSTAMG) are cleaved as a signal peptide.

As to expression, expressed by the venom gland.

Its subcellular location is the secreted. In terms of biological role, may potentiate the hypotensive effect of bradykinin. In Tityus serrulatus (Brazilian scorpion), this protein is Hypotensin-like peptide.